Reading from the N-terminus, the 841-residue chain is DNA ligase (841 aa).

NAD(+) contacts are provided by residues 54–58 (DAEYD), 103–104 (SL), and E143. K145 serves as the catalytic N6-AMP-lysine intermediate. 4 residues coordinate NAD(+): R166, E203, K321, and K345. The Zn(2+) site is built by C471, C474, C489, and C495. The disordered stretch occupies residues 554-575 (KTVAESDQMPSEGSSVGASGKH). Over residues 561-570 (QMPSEGSSVG) the composition is skewed to polar residues. Positions 764-841 (GINKAVAGKT…SEAELLTLLG (78 aa)) constitute a BRCT domain.

This sequence belongs to the NAD-dependent DNA ligase family. LigA subfamily. The cofactor is Mg(2+). Requires Mn(2+) as cofactor.

The enzyme catalyses NAD(+) + (deoxyribonucleotide)n-3'-hydroxyl + 5'-phospho-(deoxyribonucleotide)m = (deoxyribonucleotide)n+m + AMP + beta-nicotinamide D-nucleotide.. Its function is as follows. DNA ligase that catalyzes the formation of phosphodiester linkages between 5'-phosphoryl and 3'-hydroxyl groups in double-stranded DNA using NAD as a coenzyme and as the energy source for the reaction. It is essential for DNA replication and repair of damaged DNA. The protein is DNA ligase of Neisseria meningitidis serogroup C / serotype 2a (strain ATCC 700532 / DSM 15464 / FAM18).